The primary structure comprises 404 residues: Rhomboid-related protein 3 (404 aa).

EF-hand domains are found at residues 34–69 (APED…HSSK) and 70–105 (LDPH…KRSN). 7 helical membrane passes run 164-184 (WFMI…GVSL), 218-238 (IFMH…LLVG), 250-270 (IGLV…VADM), 274-294 (VVGS…NIVM), 303-325 (FKLL…AVWL), 338-358 (PSFV…VVVL), and 371-391 (WWIF…WNIF). The Nucleophile role is filled by Ser278. His343 is a catalytic residue.

This sequence belongs to the peptidase S54 family.

It is found in the membrane. The enzyme catalyses Cleaves type-1 transmembrane domains using a catalytic dyad composed of serine and histidine that are contributed by different transmembrane domains.. May be involved in regulated intramembrane proteolysis and the subsequent release of functional polypeptides from their membrane anchors. This chain is Rhomboid-related protein 3 (RHBDL3), found in Homo sapiens (Human).